A 607-amino-acid chain; its full sequence is Elongation factor 4 (607 aa).

The tr-type G domain occupies serine 11–alanine 193. GTP contacts are provided by residues aspartate 23–threonine 28 and asparagine 140–aspartate 143.

This sequence belongs to the TRAFAC class translation factor GTPase superfamily. Classic translation factor GTPase family. LepA subfamily.

The protein localises to the cell membrane. The catalysed reaction is GTP + H2O = GDP + phosphate + H(+). In terms of biological role, required for accurate and efficient protein synthesis under certain stress conditions. May act as a fidelity factor of the translation reaction, by catalyzing a one-codon backward translocation of tRNAs on improperly translocated ribosomes. Back-translocation proceeds from a post-translocation (POST) complex to a pre-translocation (PRE) complex, thus giving elongation factor G a second chance to translocate the tRNAs correctly. Binds to ribosomes in a GTP-dependent manner. This Bacillus cereus (strain ATCC 14579 / DSM 31 / CCUG 7414 / JCM 2152 / NBRC 15305 / NCIMB 9373 / NCTC 2599 / NRRL B-3711) protein is Elongation factor 4.